A 274-amino-acid polypeptide reads, in one-letter code: N-acetylmuramic acid 6-phosphate etherase (274 aa).

The region spanning 52 to 215 is the SIS domain; it reads IIPRMEQGGR…STSIMIRLGR (164 aa). Catalysis depends on E80, which acts as the Proton donor. Residue E111 is part of the active site.

Belongs to the GCKR-like family. MurNAc-6-P etherase subfamily. In terms of assembly, homodimer.

The catalysed reaction is N-acetyl-D-muramate 6-phosphate + H2O = N-acetyl-D-glucosamine 6-phosphate + (R)-lactate. It participates in amino-sugar metabolism; N-acetylmuramate degradation. Its function is as follows. Specifically catalyzes the cleavage of the D-lactyl ether substituent of MurNAc 6-phosphate, producing GlcNAc 6-phosphate and D-lactate. This is N-acetylmuramic acid 6-phosphate etherase from Porphyromonas gingivalis (strain ATCC BAA-308 / W83).